Reading from the N-terminus, the 28-residue chain is Dermaseptin-2 (28 aa).

Position 28 is a glutamine amide (Q28).

Belongs to the frog skin active peptide (FSAP) family. Dermaseptin subfamily. Expressed by the skin glands.

Its subcellular location is the secreted. In terms of biological role, antimicrobial peptide with activity against the Gram-positive bacterium S.aureus, and the Gram-negative bacteria E.coli and P.aeruginosa. Probably acts by disturbing membrane functions with its amphipathic structure. Has an activity of stimulation of insulin release, which may protect the species from being eaten by predators by causing fatal hypoglycemia. Has hemolytic activity (60% hemolysis at 128 ug/ml). The protein is Dermaseptin-2 of Phyllomedusa tarsius (Brownbelly leaf frog).